The sequence spans 205 residues: HTH-type transcriptional regulator LuxR (205 aa).

The region spanning 15 to 75 is the HTH tetR-type domain; that stretch reads LKRKQQLMEI…EVLNHVVRQF (61 aa). Residues 39-58 constitute a DNA-binding region (H-T-H motif); it reads HADIAEIAQVSVATVFNYFP.

Functionally, regulatory protein of bacterial bioluminescence. It probably binds the autoinducer molecule and potentiates the transcription of the bioluminescence operon. The protein is HTH-type transcriptional regulator LuxR (luxR) of Vibrio harveyi (Beneckea harveyi).